Consider the following 247-residue polypeptide: Fibroblast growth factor 14 (247 aa).

Disordered stretches follow at residues 1–37 (MAAA…SKNR) and 216–247 (ETVP…CKTT). The span at 15-25 (QAREQHWDRPS) shows a compositional bias: basic and acidic residues.

This sequence belongs to the heparin-binding growth factors family. In terms of assembly, interacts with SCN8A. In terms of tissue distribution, brain and testis; widely distributed in the developing nervous system. In adult, high levels in the granular layer of the cerebellum, less in hippocampus and olfactory bulb.

It is found in the nucleus. Its function is as follows. Probably involved in nervous system development and function. This chain is Fibroblast growth factor 14 (Fgf14), found in Mus musculus (Mouse).